Consider the following 235-residue polypeptide: Hydroxyacylglutathione hydrolase (235 aa).

Positions 53, 55, 57, 58, 109, 127, and 165 each coordinate Zn(2+).

The protein belongs to the metallo-beta-lactamase superfamily. Glyoxalase II family. Monomer. It depends on Zn(2+) as a cofactor.

The enzyme catalyses an S-(2-hydroxyacyl)glutathione + H2O = a 2-hydroxy carboxylate + glutathione + H(+). It participates in secondary metabolite metabolism; methylglyoxal degradation; (R)-lactate from methylglyoxal: step 2/2. Functionally, thiolesterase that catalyzes the hydrolysis of S-D-lactoyl-glutathione to form glutathione and D-lactic acid. The polypeptide is Hydroxyacylglutathione hydrolase (Actinobacillus pleuropneumoniae serotype 5b (strain L20)).